The primary structure comprises 69 residues: Brevinin-1Pb (69 aa).

The signal sequence occupies residues 1–20 (MFTLNKFLLLLFFLGTINLS). Residues 21–43 (FCEEENAEEERIDEPDETDVEVE) constitute a propeptide that is removed on maturation. Residues cysteine 63 and cysteine 69 are joined by a disulfide bond.

Expressed by the skin glands.

The protein localises to the secreted. Its function is as follows. Antibacterial activity against Gram-positive bacterium S.aureus and Gram-negative bacterium E.coli. Has activity against C.albicans. In Lithobates pipiens (Northern leopard frog), this protein is Brevinin-1Pb.